A 290-amino-acid polypeptide reads, in one-letter code: uncharacterized protein (290 aa).

Residues 7–21 (AVFG…MAQN) and T100 contribute to the NAD(+) site. K175 is an active-site residue. K243 is an NAD(+) binding site.

The protein belongs to the HIBADH-related family.

This is an uncharacterized protein from Synechocystis sp. (strain ATCC 27184 / PCC 6803 / Kazusa).